Here is a 403-residue protein sequence, read N- to C-terminus: FAD-dependent monooxygenase tazP (403 aa).

The FAD site is built by Gly-75, Arg-144, Asp-354, and Ala-367.

Belongs to the paxM FAD-dependent monooxygenase family. The cofactor is FAD.

It participates in secondary metabolite biosynthesis. In terms of biological role, FAD-dependent monooxygenase; part of the gene cluster that mediates the biosynthesis of azaterrilone A and other azaphilones, a class of fungal metabolites characterized by a highly oxygenated pyrano-quinone bicyclic core and exhibiting a broad range of bioactivities. The first step of the pathway begins with the non-reducing polyketide synthase tazA that assembles one acetyl-CoA starter unit, five malonyl-CoA units, and catalyzes a series of Claisen condensations, methylation, PT-mediated cyclization, and finally releases the first hexaketide precursor through the R-domain. The tazA product then undergoes reduction on its terminal ketone and the following pyran-ring formation by yet undetermined enzyme(s). Dehydration and enoyl reduction, possibly involving the trans-enoyl reductase tazE leads to the next intermediate. TazD is predicted as an acetyltransferase and might catalyze the acetylation steps leading to the synthesis of azaterrilone A. Azaterrilone A is not the final product of the taz pathway and both the highly reducing polyketide synthase tazB and the dual enzyme tazHJ catalyze late steps of the pathway, leading to the production of the 2 final stereoisomers that contain additional polyketide modification whose structures have still to be determined. The sequence is that of FAD-dependent monooxygenase tazP from Aspergillus terreus (strain NIH 2624 / FGSC A1156).